The primary structure comprises 417 residues: Serine hydroxymethyltransferase (417 aa).

(6S)-5,6,7,8-tetrahydrofolate is bound by residues Leu-121 and 125–127 (GHL). Lys-229 is modified (N6-(pyridoxal phosphate)lysine). 355-357 (SPF) contributes to the (6S)-5,6,7,8-tetrahydrofolate binding site.

It belongs to the SHMT family. In terms of assembly, homodimer. It depends on pyridoxal 5'-phosphate as a cofactor.

It is found in the cytoplasm. It carries out the reaction (6R)-5,10-methylene-5,6,7,8-tetrahydrofolate + glycine + H2O = (6S)-5,6,7,8-tetrahydrofolate + L-serine. The protein operates within one-carbon metabolism; tetrahydrofolate interconversion. It participates in amino-acid biosynthesis; glycine biosynthesis; glycine from L-serine: step 1/1. Catalyzes the reversible interconversion of serine and glycine with tetrahydrofolate (THF) serving as the one-carbon carrier. This reaction serves as the major source of one-carbon groups required for the biosynthesis of purines, thymidylate, methionine, and other important biomolecules. Also exhibits THF-independent aldolase activity toward beta-hydroxyamino acids, producing glycine and aldehydes, via a retro-aldol mechanism. This chain is Serine hydroxymethyltransferase, found in Shewanella putrefaciens (strain CN-32 / ATCC BAA-453).